The following is a 148-amino-acid chain: UPF0260 protein YE2365 (148 aa).

This sequence belongs to the UPF0260 family.

The protein is UPF0260 protein YE2365 of Yersinia enterocolitica serotype O:8 / biotype 1B (strain NCTC 13174 / 8081).